The chain runs to 290 residues: ATP synthase subunit a (290 aa).

A run of 7 helical transmembrane segments spans residues 54–74 (AVHLDTLGWSLLMGAIFILLF), 115–135 (IAPLALTIFVWVFLMNSLKWI), 136–156 (PVDYIPGIAHLLGLPAFKIVP), 164–184 (FGLSLGVFILILFYSFKVKGF), 201–221 (LVPFNLFLEILGLLTKPLSLA), 233–253 (VVFILIALLPFYVQWTLNVPW), and 254–274 (AIFHILVIPLQAFIFMVLTVV).

The protein belongs to the ATPase A chain family. As to quaternary structure, F-type ATPases have 2 components, CF(1) - the catalytic core - and CF(0) - the membrane proton channel. CF(1) has five subunits: alpha(3), beta(3), gamma(1), delta(1), epsilon(1). CF(0) has three main subunits: a(1), b(2) and c(9-12). The alpha and beta chains form an alternating ring which encloses part of the gamma chain. CF(1) is attached to CF(0) by a central stalk formed by the gamma and epsilon chains, while a peripheral stalk is formed by the delta and b chains.

It localises to the cell inner membrane. Functionally, key component of the proton channel; it plays a direct role in the translocation of protons across the membrane. The sequence is that of ATP synthase subunit a from Stutzerimonas stutzeri (strain A1501) (Pseudomonas stutzeri).